Reading from the N-terminus, the 165-residue chain is V-type proton ATPase 16 kDa proteolipid subunit (165 aa).

At 1-12 (MSTVFNGDETAP) the chain is on the lumenal side. Residues 13-33 (FFGFLGAAAALVFSCMGAAYG) traverse the membrane as a helical segment. At 34 to 55 (TAKSGVGVASMGVMRPELVMKS) the chain is on the cytoplasmic side. A helical transmembrane segment spans residues 56 to 76 (IVPVVMAGVLGIYGLIIAVII). The Lumenal segment spans residues 77–95 (STGINPKAKSYYLFDGYAH). A helical membrane pass occupies residues 96 to 117 (LSSGLACGLAGLSAGMAIGIVG). The Cytoplasmic segment spans residues 118 to 129 (DAGVRANAQQPK). The chain crosses the membrane as a helical span at residues 130-155 (LFVGMILILIFAEALALYGLIVGIIL). The Lumenal portion of the chain corresponds to 156–165 (SSRAGQSRAD).

It belongs to the V-ATPase proteolipid subunit family. V-ATPase is a heteromultimeric enzyme composed of a peripheral catalytic V1 complex (main components: subunits A, B, C, D, E, and F) attached to an integral membrane V0 proton pore complex (main component: the proteolipid protein; which is present as a hexamer that forms the proton-conducting pore).

It localises to the vacuole membrane. Proton-conducting pore forming subunit of the membrane integral V0 complex of vacuolar ATPase. V-ATPase is responsible for acidifying a variety of intracellular compartments in eukaryotic cells. This chain is V-type proton ATPase 16 kDa proteolipid subunit (VMAC1), found in Mesembryanthemum crystallinum (Common ice plant).